We begin with the raw amino-acid sequence, 447 residues long: N-succinylarginine dihydrolase (447 aa).

Residues 19 to 28 (AGLSFGNKAS), asparagine 110, and 137 to 138 (HR) contribute to the substrate site. Residue glutamate 174 is part of the active site. Position 212 (arginine 212) interacts with substrate. The active site involves histidine 248. Substrate is bound by residues aspartate 250 and asparagine 359. Catalysis depends on cysteine 365, which acts as the Nucleophile.

The protein belongs to the succinylarginine dihydrolase family. As to quaternary structure, homodimer.

It carries out the reaction N(2)-succinyl-L-arginine + 2 H2O + 2 H(+) = N(2)-succinyl-L-ornithine + 2 NH4(+) + CO2. It functions in the pathway amino-acid degradation; L-arginine degradation via AST pathway; L-glutamate and succinate from L-arginine: step 2/5. Catalyzes the hydrolysis of N(2)-succinylarginine into N(2)-succinylornithine, ammonia and CO(2). The chain is N-succinylarginine dihydrolase from Escherichia coli O157:H7.